Reading from the N-terminus, the 704-residue chain is Elongation factor G 1 (704 aa).

In terms of domain architecture, tr-type G spans 8–291 (ERYRNIGISA…AVIDYLPSPA (284 aa)). GTP contacts are provided by residues 17 to 24 (AHIDAGKT), 88 to 92 (DTPGH), and 142 to 145 (NKMD).

This sequence belongs to the TRAFAC class translation factor GTPase superfamily. Classic translation factor GTPase family. EF-G/EF-2 subfamily.

The protein resides in the cytoplasm. Its function is as follows. Catalyzes the GTP-dependent ribosomal translocation step during translation elongation. During this step, the ribosome changes from the pre-translocational (PRE) to the post-translocational (POST) state as the newly formed A-site-bound peptidyl-tRNA and P-site-bound deacylated tRNA move to the P and E sites, respectively. Catalyzes the coordinated movement of the two tRNA molecules, the mRNA and conformational changes in the ribosome. This Burkholderia pseudomallei (strain 1710b) protein is Elongation factor G 1.